The following is a 660-amino-acid chain: Bifunctional polymyxin resistance protein ArnA (660 aa).

The tract at residues 1–304 (MKTVVFAYHD…MLGLVQGSRL (304 aa)) is formyltransferase ArnAFT. 86–88 (HLI) provides a ligand contact to (6R)-10-formyltetrahydrofolate. The Proton donor; for formyltransferase activity role is filled by His104. (6R)-10-formyltetrahydrofolate-binding positions include Arg114 and 136 to 140 (VKRAD). Residues 314 to 660 (RRTRVLILGV…RTVDLTDKPS (347 aa)) are dehydrogenase ArnADH. NAD(+) contacts are provided by residues Asp347 and 368–369 (DI). UDP-alpha-D-glucuronate-binding positions include Ala393, Tyr398, and 432–433 (TS). The active-site Proton acceptor; for decarboxylase activity is the Glu434. Residues Arg460, Asn492, 526–535 (KLIDGGKQKR), and Tyr613 contribute to the UDP-alpha-D-glucuronate site. Arg619 (proton donor; for decarboxylase activity) is an active-site residue.

In the N-terminal section; belongs to the Fmt family. UDP-L-Ara4N formyltransferase subfamily. It in the C-terminal section; belongs to the NAD(P)-dependent epimerase/dehydratase family. UDP-glucuronic acid decarboxylase subfamily. In terms of assembly, homohexamer, formed by a dimer of trimers.

It catalyses the reaction UDP-alpha-D-glucuronate + NAD(+) = UDP-beta-L-threo-pentopyranos-4-ulose + CO2 + NADH. The catalysed reaction is UDP-4-amino-4-deoxy-beta-L-arabinose + (6R)-10-formyltetrahydrofolate = UDP-4-deoxy-4-formamido-beta-L-arabinose + (6S)-5,6,7,8-tetrahydrofolate + H(+). Its pathway is nucleotide-sugar biosynthesis; UDP-4-deoxy-4-formamido-beta-L-arabinose biosynthesis; UDP-4-deoxy-4-formamido-beta-L-arabinose from UDP-alpha-D-glucuronate: step 1/3. It functions in the pathway nucleotide-sugar biosynthesis; UDP-4-deoxy-4-formamido-beta-L-arabinose biosynthesis; UDP-4-deoxy-4-formamido-beta-L-arabinose from UDP-alpha-D-glucuronate: step 3/3. The protein operates within bacterial outer membrane biogenesis; lipopolysaccharide biosynthesis. Its function is as follows. Bifunctional enzyme that catalyzes the oxidative decarboxylation of UDP-glucuronic acid (UDP-GlcUA) to UDP-4-keto-arabinose (UDP-Ara4O) and the addition of a formyl group to UDP-4-amino-4-deoxy-L-arabinose (UDP-L-Ara4N) to form UDP-L-4-formamido-arabinose (UDP-L-Ara4FN). The modified arabinose is attached to lipid A and is required for resistance to polymyxin and cationic antimicrobial peptides. The polypeptide is Bifunctional polymyxin resistance protein ArnA (Shigella flexneri).